The chain runs to 127 residues: Large ribosomal subunit protein bL17 (127 aa).

The protein belongs to the bacterial ribosomal protein bL17 family. As to quaternary structure, part of the 50S ribosomal subunit. Contacts protein L32.

In Leuconostoc citreum (strain KM20), this protein is Large ribosomal subunit protein bL17.